Reading from the N-terminus, the 245-residue chain is Chlorophyll a-b binding protein 1B-21, chloroplastic (245 aa).

The transit peptide at 1–44 directs the protein to the chloroplast; the sequence is MASSSGLRSCSAVGVPSLLAPSSRSGRSGLPFCAYATTSGRVTM. Trp48 provides a ligand contact to chlorophyll b. Chlorophyll a-binding residues include Phe68, Glu87, and His90. Residue Arg92 coordinates chlorophyll b. A helical transmembrane segment spans residues 93–113; it reads WAMLCVPGVLVPEALGLGNWV. A chlorophyll a-binding site is contributed by Leu129. The helical transmembrane segment at 132–152 threads the bilayer; that stretch reads PVPWGNLPTILAIEFLAIAFA. The chlorophyll b site is built by Val133, Glu153, and Arg156. Residues Lys190, Glu191, Asn194, Arg196, Gln208, and His224 each coordinate chlorophyll a.

The protein belongs to the light-harvesting chlorophyll a/b-binding (LHC) protein family. The LHC complex consists of chlorophyll a-b binding proteins. Binds at least 14 chlorophylls (8 Chl-a and 6 Chl-b) and carotenoids such as lutein and neoxanthin. is required as a cofactor. In terms of processing, photoregulated by reversible phosphorylation of its threonine residues.

The protein resides in the plastid. Its subcellular location is the chloroplast thylakoid membrane. In terms of biological role, the light-harvesting complex (LHC) functions as a light receptor, it captures and delivers excitation energy to photosystems with which it is closely associated. The protein is Chlorophyll a-b binding protein 1B-21, chloroplastic (LHC Ib-21) of Hordeum vulgare (Barley).